The following is a 59-amino-acid chain: Cecropin-A (59 aa).

A signal peptide spans 1–23 (MNFTKLFLLIAMAVLLLTGQSEA). Residues 58–59 (GK) constitute a propeptide, removed in mature form (AeaeCec2).

Hemolymph (at protein level).

The protein localises to the secreted. In terms of biological role, antimicrobial peptide. Antibacterial activity against Gram-negative bacteria E.coli D22 and D31, E.carotovora, K.pneumoniae, P.aeruginosa, S.typhimurium, E.cloacae B12 and X.campestris and Gram-positive bacteria A.viridans, M.luteus, B.megaterium and S.pyogenes. Possesses antifungal activity against F.oxysporum, F.culmorum and N.crassa, C.albicans, C.neoformans and S.cerevisiae. No activity against Gram-negative S.marcescens Db11, Gram-positive B.cereus, B.subtilis, B.thuringiensis, S.aureus and L.monocytogenes, the fungi A.fumigatus and B.bassiana and C.glabrata. Partially neutralizes lipopolysaccharides (LPS). Exhibits anti-inflammatory properties: inhibits LPS-induced iNOS/NOS2 transcription, nitric oxide (NO) and pro-inflammatory cytokine production in mouse macrophages and human peripheral blood mononuclear cells (PBMCs); inhibits LPS-induced activation of MAPK and NF-kappa-B signaling pathways in mouse macrophages. In Aedes aegypti (Yellowfever mosquito), this protein is Cecropin-A (CECA).